Reading from the N-terminus, the 673-residue chain is MARENAFYITTPIYYPSGKLHIGNAYTTIACDVMARYKRMRGFDVFYLTGSDEHGQKIEQKAKEMNISPKAYVDDMAEGMKKLWNTLEISNDKFIRTTEEQHKKVVADIFERFLEQGDIYLDEYEGWYSVPDETFYTETQLEDVERDDDGNVIGGKSPDSGHPVELIKEESYFFRMSKYADRLLKFYEDNPEFIQPESRKNEMINNFIKPGLEDLAVSRTTFSWGVQVPSNPKHVVYVWIDALTNYITALGYGSEDTSLYDKFWPADVHMVGKEIVRFHTIYWPIMLMALDLPLPKKVFAHGWLLMKDGKMSKSKGNVVYPEMLVERYGLDALRYYLMREVAFGSDGVFTPEDFISRVNYDLANDLGNLLNRTVAMINKYFDGKVPEFKGEVTSFDGELQTTANNAVKEYEKHMEGMQFSDALKQVWILISRANKYIDETEPWIVAKDEGRRNELASVMVHLAESLHAAALMLQPFLTHAPKKIAEQLGLGEEYGLDWGTIGFGNFPENTTVVKKGTPIFPRLDLDEEAAYIRDQMANGANAASSEDETGDWDPNETDLVSEKEKQIKYDVFDKVELKVAEVKDCSKVEGADKLLKFRLDAGDNGDRQILSGIAEYYSEPEQLIGKKVVIVANLKPRKMRGEISQGMILSAEYDGKLQIVEAPSEAPNGSSIS.

The 'HIGH' region signature appears at 14-24 (YYPSGKLHIGN). A 'KMSKS' region motif is present at residues 310-314 (KMSKS). Lysine 313 is an ATP binding site. Residues 571–673 (VFDKVELKVA…SEAPNGSSIS (103 aa)) enclose the tRNA-binding domain.

The protein belongs to the class-I aminoacyl-tRNA synthetase family. MetG type 2B subfamily. As to quaternary structure, homodimer.

It localises to the cytoplasm. It catalyses the reaction tRNA(Met) + L-methionine + ATP = L-methionyl-tRNA(Met) + AMP + diphosphate. Is required not only for elongation of protein synthesis but also for the initiation of all mRNA translation through initiator tRNA(fMet) aminoacylation. This is Methionine--tRNA ligase (metG) from Oceanobacillus iheyensis (strain DSM 14371 / CIP 107618 / JCM 11309 / KCTC 3954 / HTE831).